The following is an 81-amino-acid chain: Cytotoxin 5b (81 aa).

An N-terminal signal peptide occupies residues 1 to 21 (MKTLLLTLLVVTIVCLDLGYT). 4 cysteine pairs are disulfide-bonded: Cys-24–Cys-42, Cys-35–Cys-59, Cys-63–Cys-74, and Cys-75–Cys-80.

It belongs to the three-finger toxin family. Short-chain subfamily. Type IA cytotoxin sub-subfamily. As to quaternary structure, monomer in solution; Homodimer and oligomer in the presence of negatively charged lipids forming a pore with a size ranging between 20 and 30 Angstroms. As to expression, expressed by the venom gland.

The protein resides in the secreted. The protein localises to the target cell membrane. Its function is as follows. Shows cytolytic activity on many different cells by forming pore in lipid membranes. In vivo, increases heart rate or kills the animal by cardiac arrest. In addition, it binds to heparin with high affinity, interacts with Kv channel-interacting protein 1 (KCNIP1) in a calcium-independent manner, and binds to integrin alpha-V/beta-3 (ITGAV/ITGB3) with moderate affinity. This is Cytotoxin 5b from Naja sputatrix (Malayan spitting cobra).